We begin with the raw amino-acid sequence, 482 residues long: GTPase Obg (482 aa).

In terms of domain architecture, Obg spans proline 2–valine 159. In terms of domain architecture, OBG-type G spans alanine 160 to valine 340. GTP is bound by residues glycine 166 to serine 173, phenylalanine 191 to valine 195, aspartate 212 to glycine 215, asparagine 292 to aspartate 295, and serine 321 to leucine 323. Positions 173 and 193 each coordinate Mg(2+). Residues proline 358 to proline 438 form the OCT domain. Residues proline 441–glutamate 482 are disordered. Basic and acidic residues predominate over residues threonine 453–arginine 469.

It belongs to the TRAFAC class OBG-HflX-like GTPase superfamily. OBG GTPase family. As to quaternary structure, monomer. Mg(2+) is required as a cofactor.

It localises to the cytoplasm. Its function is as follows. An essential GTPase which binds GTP, GDP and possibly (p)ppGpp with moderate affinity, with high nucleotide exchange rates and a fairly low GTP hydrolysis rate. Plays a role in control of the cell cycle, stress response, ribosome biogenesis and in those bacteria that undergo differentiation, in morphogenesis control. This Mycobacteroides abscessus (strain ATCC 19977 / DSM 44196 / CCUG 20993 / CIP 104536 / JCM 13569 / NCTC 13031 / TMC 1543 / L948) (Mycobacterium abscessus) protein is GTPase Obg.